Here is a 198-residue protein sequence, read N- to C-terminus: Calcium channel flower (198 aa).

3 consecutive transmembrane segments (helical) span residues 36-56 (LGIVAAFFAILFGLWNVLSII), 67-89 (IIQMIAGFIVMVLEAPCCFVCIE), and 114-134 (AVPPIFMCFGLASLFGSGLIF).

Belongs to the calcium channel flower family. As to quaternary structure, homomultimer. Associates with the dally/ magu complex.

It is found in the cell membrane. It localises to the cytoplasmic vesicle. Its subcellular location is the secretory vesicle. The protein localises to the synaptic vesicle membrane. The protein resides in the presynaptic cell membrane. It is found in the endosome. Channel activity is inhibited by La(3+), which reduces Ca(2+) influx and thus inhibits it's function in promoting activity-dependent bulk endocytosis (ADBE) in response to high stimuli. In terms of biological role, transmembrane protein which mediates synaptic endocytosis, fitness-based cell culling, neuronal culling, morphogen gradient scaling, and calcium transport. Regulates synaptic endocytosis and hence couples exo- with endocytosis. Controls two major modes of synaptic vesicle (SV) endocytosis in the synaptic boutons of neuromuscular junctions (NMJs); Ca(2+) channel-independent Clathrin-mediated endocytosis (CME) in response to mild stimulation, and Ca(2+) channel-dependent activity-dependent bulk endocytosis (ADBE) in response to strong stimulation. Functions in ADBE and subsequent SV reformation from bulk endosomes by initiating Ca(2+) channel-dependent phosphatidylinositol 4,5-bisphosphate (PtdIns(4,5)P2) compartmentalization in synaptic boutons. There it acts at the periactive zone to provide the low Ca(2+) levels required to initiate Calcineurin activation and upregulate PtdIns(4,5)P2. Conversely PtdIns(4,5)P2 enhances fwe Ca(2+) channel-activity, establishing a positive feedback loop that induces PtdIns(4,5)P2 microdomain at the periactive zone. These microdomains trigger bulk membrane invagination (i.e. ADBE) by triggering actin polymerization while also promoting localization of fwe to bulk endosomes, thereby removing the ADBE trigger to reduce endocytosis and prevent excess membrane uptake. PtdIns(4,5)P2 then promotes SV reformation from the bulk endosomes, to coordinate ADBE and subsequent SV reformation. Different combinations of the flower isoforms at the cell membrane are also required for the identification and elimination of suboptimal or supernumerary cells during development, regeneration, and adulthood. Required for the recognition and elimination of unfit cells in the developing wing during cell competition. In the developing pupal retina, mediates the elimination of unwanted postmitotic neurons, including supernumerary photoreceptor neurons that form at the periphery of the retina and are contained within incomplete ommatidia units. Also required for efficient elimination and replacement of old neurons by newly generated neurons during regeneration in the adult brain following mechanical injury. Downstream of the flower fitness fingerprints, cells identified as unwanted or unfit are eliminated via apoptosis through the expression of ahuizotl (azot). However, the cells marked for elimination by the flower isoforms only undergo apoptosis if additional thresholds are met; (1) their neighboring fit/healthy cells express different levels of the fwe isoforms, and (2) the levels of the protective signal SPARC expressed by the loser or unwanted cells are unable to inhibit caspase activation. These additional thresholds for flower-mediated apoptosis, allows useful cells to recover from transient and limited stress before they are unnecessarily eliminated. Functions with dally and magu in a mechanism of scaling, which utilises apoptosis to ensure that the dpp morphogen gradient, which mediates organ growth, remains proportional to the size of the growing wing. In this mechanism, fwe represses dally- and Magu-dependent activity in expanding the gradient, and dally/Magu inhibits fwe-dependent apoptosis to keep cell death rate low. When the levels of these different proteins are optimally regulated the gradient correctly scales with organ growth but when this fails, fwe-mediated apoptosis is activated to trim the developing tissue to match the correct size of the gradient. The chain is Calcium channel flower from Drosophila persimilis (Fruit fly).